The primary structure comprises 129 residues: HTH-type transcriptional regulator GlnR (129 aa).

The 69-residue stretch at leucine 10–methionine 78 folds into the HTH merR-type domain. Residues isoleucine 13–glutamate 32 constitute a DNA-binding region (H-T-H motif).

In terms of assembly, homodimer under conditions of nitrogen excess. Monomer under conditions of nitrogen-limited. Interacts with feedback-inhibited GlnA in order to stabilizes GlnR-DNA complex.

Under conditions of nitrogen excess, the DNA binding activity of GlnR is activated by a transient interaction with feedback-inhibited GlnA. Under conditions of nitrogen-limited, GlnR is autoinhibited by its C-terminal region. Functionally, transcription repressor during nitrogen excess. On the contrary of the MerR members, which require longer DNA sites for high-affinity binding, GlnR requires a DNA sequence of 17 nucleotides as minimal binding site. The sequence is that of HTH-type transcriptional regulator GlnR from Bacillus anthracis.